The chain runs to 462 residues: Bifunctional protein GlmU (462 aa).

The interval 1–239 is pyrophosphorylase; the sequence is MTESVSKPVR…EASVQGVNAQ (239 aa). Residues 17–20, Lys-31, Gln-84, and 89–90 each bind UDP-N-acetyl-alpha-D-glucosamine; these read LAAG and GT. A Mg(2+)-binding site is contributed by Asp-114. UDP-N-acetyl-alpha-D-glucosamine is bound by residues Gly-150, Glu-165, Asn-180, and Asn-237. Asn-237 provides a ligand contact to Mg(2+). Residues 240 to 260 form a linker region; it reads AELAAAEAVWQQNRRKALMVD. An N-acetyltransferase region spans residues 261 to 462; it reads GVTMPAPDTV…QKDKKKDKKA (202 aa). UDP-N-acetyl-alpha-D-glucosamine-binding residues include Arg-326 and Lys-344. The Proton acceptor role is filled by His-356. Positions 359 and 370 each coordinate UDP-N-acetyl-alpha-D-glucosamine. Acetyl-CoA contacts are provided by residues Ala-373, 379–380, Ser-398, Ser-416, and Arg-433; that span reads NY.

In the N-terminal section; belongs to the N-acetylglucosamine-1-phosphate uridyltransferase family. The protein in the C-terminal section; belongs to the transferase hexapeptide repeat family. In terms of assembly, homotrimer. Mg(2+) is required as a cofactor.

The protein resides in the cytoplasm. The catalysed reaction is alpha-D-glucosamine 1-phosphate + acetyl-CoA = N-acetyl-alpha-D-glucosamine 1-phosphate + CoA + H(+). The enzyme catalyses N-acetyl-alpha-D-glucosamine 1-phosphate + UTP + H(+) = UDP-N-acetyl-alpha-D-glucosamine + diphosphate. The protein operates within nucleotide-sugar biosynthesis; UDP-N-acetyl-alpha-D-glucosamine biosynthesis; N-acetyl-alpha-D-glucosamine 1-phosphate from alpha-D-glucosamine 6-phosphate (route II): step 2/2. It participates in nucleotide-sugar biosynthesis; UDP-N-acetyl-alpha-D-glucosamine biosynthesis; UDP-N-acetyl-alpha-D-glucosamine from N-acetyl-alpha-D-glucosamine 1-phosphate: step 1/1. It functions in the pathway bacterial outer membrane biogenesis; LPS lipid A biosynthesis. Its function is as follows. Catalyzes the last two sequential reactions in the de novo biosynthetic pathway for UDP-N-acetylglucosamine (UDP-GlcNAc). The C-terminal domain catalyzes the transfer of acetyl group from acetyl coenzyme A to glucosamine-1-phosphate (GlcN-1-P) to produce N-acetylglucosamine-1-phosphate (GlcNAc-1-P), which is converted into UDP-GlcNAc by the transfer of uridine 5-monophosphate (from uridine 5-triphosphate), a reaction catalyzed by the N-terminal domain. The sequence is that of Bifunctional protein GlmU from Caulobacter vibrioides (strain ATCC 19089 / CIP 103742 / CB 15) (Caulobacter crescentus).